The sequence spans 1082 residues: Transcription elongation factor SPT5 (1082 aa).

Residues 1–28 (MSDSEDSNFSEEEDSERSSEAEEAEVEE) are compositionally biased toward acidic residues. The segment at 1 to 88 (MSDSEDSNFS…DVDDEYEDED (88 aa)) is disordered. Serine 32 and serine 36 each carry phosphoserine. Composition is skewed to acidic residues over residues 38 to 62 (KEEE…EDDD) and 76 to 88 (DEAD…EDED). Lysine 141 is covalently cross-linked (Glycyl lysine isopeptide (Lys-Gly) (interchain with G-Cter in SUMO2)). The interaction with SUPT4H1 and SUPT4H2 stretch occupies residues 174–268 (DPNLWTVKCK…TDVLKVVKEV (95 aa)). In terms of domain architecture, KOW 1 spans 271-304 (LKPKSWVRLKRGIYKDDIAQVDYVEPSQNTISLK). Residues 311–418 (YDRIKARMSL…STGKEREHNF (108 aa)) are interaction with RNA polymerase II. The UBR5-degron motif lies at 326-332 (KRKKFKR). KOW domains are found at residues 418 to 449 (FQPG…ITIM) and 470 to 501 (FKMG…VILF). Lysine 577 contacts RNA. Residues 592–625 (IHVKDIVKVIDGPHSGREGEIRHLYRSFAFLHCK) enclose the KOW 4 domain. Arginine 617 is a binding site for DNA. The residue at position 661 (threonine 661) is a Phosphothreonine. Phosphoserine occurs at positions 664 and 684. The interval 669–694 (SPMHPSAEGQHGGFGSPGGMSRGRGR) is disordered. Over residues 678–690 (QHGGFGSPGGMSR) the composition is skewed to gly residues. Asymmetric dimethylarginine; alternate is present on residues arginine 690 and arginine 692. Residues arginine 690 and arginine 692 each carry the omega-N-methylarginine; alternate modification. At arginine 692 the chain carries Symmetric dimethylarginine; alternate. A KOW 5 domain is found at 698–731 (ELIGQTVRISQGPYKGYIGVVKDATESTARVELH). Lysine 712 is subject to N6-acetyllysine. Positions 741-801 (RQRLTTVDSQ…RTPHYGSQTP (61 aa)) are enriched in polar residues. A disordered region spans residues 741 to 972 (RQRLTTVDSQ…GSGIEQNSSD (232 aa)). The CTR1-1; approximate repeat unit spans residues 748-753 (DSQRPG). A 9 X 7 AA approximate tandem repeats of G-S-[QR]-T-P-X-[YQ], motif CTR1 region spans residues 748–811 (DSQRPGGMTS…LHDGSRTPAQ (64 aa)). The CTR1-2 repeat unit spans residues 754 to 759 (GMTSTY). Residues 760–765 (GRTPMY) form a CTR1-3 repeat. A CTR1-4 repeat occupies 766 to 772 (GSQTPMY). 2 positions are modified to phosphothreonine; by CDK9: threonine 769 and threonine 778. The stretch at 775–781 (GSRTPMY) is one CTR1-5 repeat. A CTR1-6 repeat occupies 782 to 788 (GSQTPLQ). Serine 783 is subject to Phosphoserine. Phosphothreonine occurs at positions 785 and 793. The CTR1-7 repeat unit spans residues 790 to 796 (GSRTPHY). Residues 797–803 (GSQTPLH) form a CTR1-8 repeat. Residue serine 798 is modified to Phosphoserine. A phosphothreonine mark is found at threonine 800 and threonine 808. Residues 805 to 811 (GSRTPAQ) form a CTR1-9 repeat. Acidic residues predominate over residues 828 to 838 (EEYEYAFDDEP). The CTR2-1 repeat unit spans residues 838–845 (PTPSPQAY). The segment at 838-944 (PTPSPQAYGG…ASPSPSPVGY (107 aa)) is 10 X 8 AA approximate tandem repeats of P-[TS]-P-S-P-[QA]-[SG]-Y, motif CTR2. The CTR2-2; approximate repeat unit spans residues 848 to 856 (TPNPQTPGY). A compositionally biased stretch (pro residues) spans 851–860 (PQTPGYPDPS). A CTR2-3; approximate repeat occupies 857-863 (PDPSSPQ). The span at 861 to 884 (SPQVNPQYNPQTPGTPAMYNTDQF) shows a compositional bias: polar residues. The stretch at 875–879 (TPAMY) is one CTR2-4; half-length repeat. The stretch at 890–896 (PSPQGSY) is one CTR2-5; approximate repeat. The span at 890–905 (PSPQGSYQPSPSPQSY) shows a compositional bias: low complexity. The CTR2-6 repeat unit spans residues 898-905 (PSPSPQSY). The CTR2-7; approximate repeat unit spans residues 910–915 (PSPAGY). The stretch at 918–924 (THSPASY) is one CTR2-8 repeat. One copy of the CTR2-9 repeat lies at 926-933 (PTPSPMAY). Residues 937-944 (PSPSPVGY) form a CTR2-10 repeat. Threonine 1028 is modified (phosphothreonine). Lysine 1031 participates in a covalent cross-link: Glycyl lysine isopeptide (Lys-Gly) (interchain with G-Cter in SUMO2).

This sequence belongs to the SPT5 family. As to quaternary structure, interacts with SUPT4H1 to form DSIF. DSIF interacts with the positive transcription elongation factor b complex (P-TEFb complex), which is composed of CDK9 and cyclin-T (CCNT1 or CCNT2). DSIF interacts with RNA polymerase II, and this interaction is reduced by phosphorylation of the C-terminal domain (CTD) of POLR2A by P-TEFb. DSIF also interacts with the NELF complex, which is composed of NELFA, NELFB, NELFD and NELFE, and this interaction occurs following prior binding of DSIF to RNA polymerase II. Also interacts with PRMT1/HRMT1L2, HTATSF1/TATSF1, RNGTT/CAP1A, PRMT5/SKB1, SUPT6H, and can interact with PIN1. Component of a complex which is at least composed of HTATSF1/Tat-SF1, the P-TEFb complex components CDK9 and CCNT1, RNA polymerase II, SUPT5H, and NCL/nucleolin. Interacts with MCM3AP. Methylated by PRMT1/HRMT1L2 and PRMT5/SKB1. Methylation negatively regulates interaction with P-TEFb and RNA polymerase II. Post-translationally, phosphorylated by CDK7 and CDK9. Phosphorylation by P-TEFb (CDK9) at Thr residues of the C-terminal repeats alleviates transcriptional pausing and promotes transcription elongation. Dephosphorylated by the INTAC complex when transcripts are unfavorably configured for transcriptional elongation, leading to premature transcription termination: dephosphorylation is mediated by the PPP2CA component of the INTAC complex. Dephosphorylated by the PNUTS-PP1 complex in termination zones downstream of poly(A) sites, thereby promoting deceleration of RNA polymerase II transcription. Dephosphorylated by the PNUTS-PP1 complex in termination zones downstream of poly(A) sites, thereby promoting deceleration of RNA polymerase II transcription. Phosphorylation may also stimulate interaction with PIN1. Bulk phosphorylation occurs predominantly in mitosis. In terms of processing, ubiquitinated by UBR5 when not assembled in the DSIF complex, leading to its degradation: UBR5 recognizes and binds a degron that is not accessible when SUPT5H is part of the DSIF complex.

The protein resides in the nucleus. Its function is as follows. Component of the DRB sensitivity-inducing factor complex (DSIF complex), which regulates mRNA processing and transcription elongation by RNA polymerase II. DSIF positively regulates mRNA capping by stimulating the mRNA guanylyltransferase activity of RNGTT/CAP1A. DSIF also acts cooperatively with the negative elongation factor complex (NELF complex) to enhance transcriptional pausing at sites proximal to the promoter. Transcriptional pausing may facilitate the assembly of an elongation competent RNA polymerase II complex. DSIF and NELF promote pausing by inhibition of the transcription elongation factor TFIIS/S-II. TFIIS/S-II binds to RNA polymerase II at transcription pause sites and stimulates the weak intrinsic nuclease activity of the enzyme. Cleavage of blocked transcripts by RNA polymerase II promotes the resumption of transcription from the new 3' terminus and may allow repeated attempts at transcription through natural pause sites. Following phosphorylation by CDK9, DSIF can also positively regulate transcriptional elongation. This Mus musculus (Mouse) protein is Transcription elongation factor SPT5 (Supt5h).